The sequence spans 106 residues: Cell division protein FtsL (106 aa).

At 1–22 (MPRQSPPNLAKLIALDLLTVGR) the chain is on the cytoplasmic side. Residues 23 to 43 (VPLLLLVLIFSCAMGVVFMTH) form a helical membrane-spanning segment. The Periplasmic segment spans residues 44-106 (HTRQAISAKD…SDKEVVINLK (63 aa)).

Belongs to the FtsL family. Part of a complex composed of FtsB, FtsL and FtsQ.

It localises to the cell inner membrane. Functionally, essential cell division protein. May link together the upstream cell division proteins, which are predominantly cytoplasmic, with the downstream cell division proteins, which are predominantly periplasmic. The polypeptide is Cell division protein FtsL (Vibrio cholerae serotype O1 (strain ATCC 39315 / El Tor Inaba N16961)).